Reading from the N-terminus, the 232-residue chain is Large ribosomal subunit protein uL1 (232 aa).

The protein belongs to the universal ribosomal protein uL1 family. In terms of assembly, part of the 50S ribosomal subunit.

Functionally, binds directly to 23S rRNA. The L1 stalk is quite mobile in the ribosome, and is involved in E site tRNA release. Protein L1 is also a translational repressor protein, it controls the translation of the L11 operon by binding to its mRNA. This chain is Large ribosomal subunit protein uL1, found in Methylorubrum populi (strain ATCC BAA-705 / NCIMB 13946 / BJ001) (Methylobacterium populi).